Reading from the N-terminus, the 150-residue chain is Putative STAG3-like protein 4 (150 aa).

Belongs to the SCC3 family.

This is Putative STAG3-like protein 4 (STAG3L4) from Homo sapiens (Human).